The chain runs to 230 residues: 2,3-bisphosphoglycerate-dependent phosphoglycerate mutase (230 aa).

Substrate contacts are provided by residues 8–15 (RHGESEWN), 21–22 (TG), Arg-60, 87–90 (ERHY), Lys-98, 114–115 (RR), and 183–184 (GN). His-9 functions as the Tele-phosphohistidine intermediate in the catalytic mechanism. Glu-87 acts as the Proton donor/acceptor in catalysis.

It belongs to the phosphoglycerate mutase family. BPG-dependent PGAM subfamily.

It carries out the reaction (2R)-2-phosphoglycerate = (2R)-3-phosphoglycerate. The protein operates within carbohydrate degradation; glycolysis; pyruvate from D-glyceraldehyde 3-phosphate: step 3/5. Its function is as follows. Catalyzes the interconversion of 2-phosphoglycerate and 3-phosphoglycerate. The polypeptide is 2,3-bisphosphoglycerate-dependent phosphoglycerate mutase (Streptococcus uberis (strain ATCC BAA-854 / 0140J)).